We begin with the raw amino-acid sequence, 93 residues long: Ribonuclease P protein component 1 (93 aa).

It belongs to the eukaryotic/archaeal RNase P protein component 1 family. In terms of assembly, consists of a catalytic RNA component and at least 4-5 protein subunits.

It is found in the cytoplasm. It carries out the reaction Endonucleolytic cleavage of RNA, removing 5'-extranucleotides from tRNA precursor.. Its function is as follows. Part of ribonuclease P, a protein complex that generates mature tRNA molecules by cleaving their 5'-ends. The polypeptide is Ribonuclease P protein component 1 (Methanosphaera stadtmanae (strain ATCC 43021 / DSM 3091 / JCM 11832 / MCB-3)).